A 310-amino-acid polypeptide reads, in one-letter code: Dermonecrotic toxin LiSicTox-alphaII2 (310 aa).

The N-terminal stretch at 1–18 (MLLRIALILGCWSILSEG) is a signal peptide. Residues 19-26 (AENDIAER) constitute a propeptide that is removed on maturation. Residue His38 is part of the active site. Mg(2+) contacts are provided by Glu58 and Asp60. His74 functions as the Nucleophile in the catalytic mechanism. 2 disulfide bridges follow: Cys78–Cys84 and Cys80–Cys224. Asn99 carries an N-linked (GlcNAc...) asparagine glycan. Mg(2+) is bound at residue Asp118.

Belongs to the arthropod phospholipase D family. Class II subfamily. Requires Mg(2+) as cofactor. In terms of tissue distribution, expressed by the venom gland.

The protein resides in the secreted. It carries out the reaction an N-(acyl)-sphingosylphosphocholine = an N-(acyl)-sphingosyl-1,3-cyclic phosphate + choline. The enzyme catalyses an N-(acyl)-sphingosylphosphoethanolamine = an N-(acyl)-sphingosyl-1,3-cyclic phosphate + ethanolamine. The catalysed reaction is a 1-acyl-sn-glycero-3-phosphocholine = a 1-acyl-sn-glycero-2,3-cyclic phosphate + choline. It catalyses the reaction a 1-acyl-sn-glycero-3-phosphoethanolamine = a 1-acyl-sn-glycero-2,3-cyclic phosphate + ethanolamine. Its function is as follows. Dermonecrotic toxins cleave the phosphodiester linkage between the phosphate and headgroup of certain phospholipids (sphingolipid and lysolipid substrates), forming an alcohol (often choline) and a cyclic phosphate. This toxin acts on sphingomyelin (SM). It may also act on ceramide phosphoethanolamine (CPE), lysophosphatidylcholine (LPC) and lysophosphatidylethanolamine (LPE), but not on lysophosphatidylserine (LPS), and lysophosphatidylglycerol (LPG). It acts by transphosphatidylation, releasing exclusively cyclic phosphate products as second products. Induces dermonecrosis, hemolysis, increased vascular permeability, edema, inflammatory response, and platelet aggregation. The chain is Dermonecrotic toxin LiSicTox-alphaII2 from Loxosceles intermedia (Brown spider).